The sequence spans 203 residues: Dephospho-CoA kinase (203 aa).

The region spanning 3 to 202 (KIGLTGSIGM…MRIAKGDFRN (200 aa)) is the DPCK domain. Residue 11 to 16 (GMGKST) participates in ATP binding.

This sequence belongs to the CoaE family.

Its subcellular location is the cytoplasm. The enzyme catalyses 3'-dephospho-CoA + ATP = ADP + CoA + H(+). The protein operates within cofactor biosynthesis; coenzyme A biosynthesis; CoA from (R)-pantothenate: step 5/5. Functionally, catalyzes the phosphorylation of the 3'-hydroxyl group of dephosphocoenzyme A to form coenzyme A. The sequence is that of Dephospho-CoA kinase from Rhizobium etli (strain ATCC 51251 / DSM 11541 / JCM 21823 / NBRC 15573 / CFN 42).